We begin with the raw amino-acid sequence, 113 residues long: Iron-sulfur cluster insertion protein ErpA (113 aa).

Iron-sulfur cluster-binding residues include Cys41, Cys105, and Cys107.

The protein belongs to the HesB/IscA family. In terms of assembly, homodimer. The cofactor is iron-sulfur cluster.

In terms of biological role, required for insertion of 4Fe-4S clusters for at least IspG. The polypeptide is Iron-sulfur cluster insertion protein ErpA (Actinobacillus pleuropneumoniae serotype 7 (strain AP76)).